The chain runs to 128 residues: Elongation factor G (128 aa).

It belongs to the GTP-binding elongation factor family. EF-G/EF-2 subfamily.

It is found in the cytoplasm. Its function is as follows. Catalyzes the GTP-dependent ribosomal translocation step during translation elongation. During this step, the ribosome changes from the pre-translocational (PRE) to the post-translocational (POST) state as the newly formed A-site-bound peptidyl-tRNA and P-site-bound deacylated tRNA move to the P and E sites, respectively. Catalyzes the coordinated movement of the two tRNA molecules, the mRNA and conformational changes in the ribosome. The protein is Elongation factor G (fusA) of Planobispora rosea.